The primary structure comprises 297 residues: Transcription factor PCF8 (297 aa).

A disordered region spans residues 1-22 (MEEVVGGGKERKRPRGALVGVG). Residues 46–104 (GKDRHSKVVTSRGLRDRRVRLSVPTAIAFYDIQDRLGVDQPSKAIEWLIRAAAAAIDAL) form the TCP domain. Disordered regions lie at residues 116–136 (AASS…SETS) and 273–297 (AAPA…ERKT). Over residues 282–297 (GERRLQLWDFKEERKT) the composition is skewed to basic and acidic residues.

In terms of assembly, forms homodimers and heterodimers.

It localises to the nucleus. Functionally, transcription activator. Binds the promoter core sequence 5'-GGNCC-3'. The polypeptide is Transcription factor PCF8 (PCF8) (Oryza sativa subsp. indica (Rice)).